Here is a 1058-residue protein sequence, read N- to C-terminus: Carbamoyl phosphate synthase pyrimidine-specific large chain (1058 aa).

The tract at residues 1–401 (MPKRTDIHKI…ATLKAVRSLE (401 aa)) is carboxyphosphate synthetic domain. The ATP site is built by arginine 129, arginine 169, glycine 175, glycine 176, glutamine 208, isoleucine 210, glutamate 215, glycine 241, isoleucine 242, histidine 243, glutamine 284, and glutamate 298. Residues 133–327 (KALMEELGEP…IAKMAAKIAV (195 aa)) form the ATP-grasp 1 domain. Mg(2+) contacts are provided by glutamine 284, glutamate 298, and asparagine 300. Mn(2+) is bound by residues glutamine 284, glutamate 298, and asparagine 300. An oligomerization domain region spans residues 402 to 546 (IGVHHVEEPA…YGTYEFENES (145 aa)). The tract at residues 547–929 (IVTKRPSVLV…ALYKAFEAAK (383 aa)) is carbamoyl phosphate synthetic domain. One can recognise an ATP-grasp 2 domain in the interval 671–861 (DKVIKALAIP…MAQVATRAIL (191 aa)). Arginine 707, serine 746, leucine 748, glutamate 752, glycine 777, valine 778, histidine 779, serine 780, glutamine 820, and glutamate 832 together coordinate ATP. Positions 820, 832, and 834 each coordinate Mg(2+). Residues glutamine 820, glutamate 832, and asparagine 834 each contribute to the Mn(2+) site. The 129-residue stretch at 930-1058 (LHVPSHGNVL…ESQSFVTQAL (129 aa)) folds into the MGS-like domain. The segment at 930–1058 (LHVPSHGNVL…ESQSFVTQAL (129 aa)) is allosteric domain.

Belongs to the CarB family. Composed of two chains; the small (or glutamine) chain promotes the hydrolysis of glutamine to ammonia, which is used by the large (or ammonia) chain to synthesize carbamoyl phosphate. Tetramer of heterodimers (alpha,beta)4. Requires Mg(2+) as cofactor. Mn(2+) is required as a cofactor.

It catalyses the reaction hydrogencarbonate + L-glutamine + 2 ATP + H2O = carbamoyl phosphate + L-glutamate + 2 ADP + phosphate + 2 H(+). The enzyme catalyses hydrogencarbonate + NH4(+) + 2 ATP = carbamoyl phosphate + 2 ADP + phosphate + 2 H(+). It functions in the pathway amino-acid biosynthesis; L-arginine biosynthesis; carbamoyl phosphate from bicarbonate: step 1/1. Its pathway is pyrimidine metabolism; UMP biosynthesis via de novo pathway; (S)-dihydroorotate from bicarbonate: step 1/3. Small subunit of the glutamine-dependent carbamoyl phosphate synthetase (CPSase). CPSase catalyzes the formation of carbamoyl phosphate from the ammonia moiety of glutamine, carbonate, and phosphate donated by ATP, constituting the first step of the biosynthetic pathway leading to pyrimidine nucleotides. The large subunit (synthetase) binds the substrates ammonia (free or transferred from glutamine from the small subunit), hydrogencarbonate and ATP and carries out an ATP-coupled ligase reaction, activating hydrogencarbonate by forming carboxy phosphate which reacts with ammonia to form carbamoyl phosphate. The polypeptide is Carbamoyl phosphate synthase pyrimidine-specific large chain (pyrAB) (Lactiplantibacillus plantarum (strain ATCC BAA-793 / NCIMB 8826 / WCFS1) (Lactobacillus plantarum)).